Consider the following 551-residue polypeptide: MDRRRFIKGSMAMAAVCGTSGIASLFSQAAFAADSDIADGQTQRFDFSILQSMAHDLAQTAWRGAPRPLPDTLATMTPQAYNSIQYDAEKSLWHNVENRQLDAQFFHMGMGFRRRVRMFSVDPATHLAREIHFRPELFKYNDAGVDTKQLEGQSDLGFAGFRVFKAPELARRDVVSFLGASYFRAVDDTYQYGLSARGLAIDTYTDSKEEFPDFTAFWFDTVKPGATTFTVYALLDSASITGAYKFTIHCEKSQVIMDVENHLYARKDIKQLGIAPMTSMFSCGTNERRMCDTIHPQIHDSDRLSMWRGNGEWICRPLNNPQKLQFNAYTDNNPKGFGLLQLDRDFSHYQDIMGWYNKRPSLWVEPRNKWGKGTIGLMEIPTTGETLDNIVCFWQPEKAVKAGDEFAFQYRLYWSAQPPVHCPLARVMATRTGMGGFPEGWAPGEHYPEKWARRFAVDFVGGDLKAAAPKGIEPVITLSSGEAKQIEILYIEPIDGYRIQFDWYPTSDSTDPVDMRMYLRCQGDAISETWLYQYFPPAPDKRQYVDDRVMS.

Positions 1 to 32 (MDRRRFIKGSMAMAAVCGTSGIASLFSQAAFA) form a signal peptide, tat-type signal.

This sequence belongs to the OpgD/OpgG family. Post-translationally, predicted to be exported by the Tat system. The position of the signal peptide cleavage has not been experimentally proven.

The protein resides in the periplasm. The protein operates within glycan metabolism; osmoregulated periplasmic glucan (OPG) biosynthesis. Probably involved in the control of the structural glucose backbone of osmoregulated periplasmic glucans (OPGs). The protein is Glucans biosynthesis protein D of Escherichia coli O139:H28 (strain E24377A / ETEC).